Reading from the N-terminus, the 261-residue chain is Glucosamine-6-phosphate deaminase (261 aa).

D67 acts as the Proton acceptor; for enolization step in catalysis. Catalysis depends on D136, which acts as the For ring-opening step. H138 acts as the Proton acceptor; for ring-opening step in catalysis. E143 acts as the For ring-opening step in catalysis.

It belongs to the glucosamine/galactosamine-6-phosphate isomerase family. NagB subfamily.

It catalyses the reaction alpha-D-glucosamine 6-phosphate + H2O = beta-D-fructose 6-phosphate + NH4(+). It functions in the pathway amino-sugar metabolism; N-acetylneuraminate degradation; D-fructose 6-phosphate from N-acetylneuraminate: step 5/5. In terms of biological role, catalyzes the reversible isomerization-deamination of glucosamine 6-phosphate (GlcN6P) to form fructose 6-phosphate (Fru6P) and ammonium ion. This is Glucosamine-6-phosphate deaminase from Mycolicibacterium smegmatis (strain ATCC 700084 / mc(2)155) (Mycobacterium smegmatis).